A 200-amino-acid chain; its full sequence is Putative hydrolase MhqD (200 aa).

Residues Ser-100, Asp-150, and His-181 each act as charge relay system in the active site.

It belongs to the AB hydrolase superfamily. AB hydrolase 2 family.

The protein localises to the cytoplasm. Putative hydrolase that may contribute to the degradation of aromatic compounds. This chain is Putative hydrolase MhqD (mhqD), found in Bacillus subtilis (strain 168).